A 433-amino-acid chain; its full sequence is Sensor protein RstB (433 aa).

Topologically, residues 1 to 3 (MKK) are cytoplasmic. A helical membrane pass occupies residues 4–24 (LFIQFYLLLFVCFLVMSLLVG). Residues 25–135 (LVYKFTAERA…PYLYYLHQMR (111 aa)) lie on the Periplasmic side of the membrane. Residues 136–156 (LLDIALIAFIAISLAFPVFIW) form a helical membrane-spanning segment. Over 157 to 433 (MRPHWQDMLK…WHNIPQFTSA (277 aa)) the chain is Cytoplasmic. Residues 158-210 (RPHWQDMLKLEAAAQRFGDGHLNERIHFDEGSSFERLGVAFNQMADNINALIA) enclose the HAMP domain. Residues 218-425 (GIAHELRTPL…RFSFSWPLWH (208 aa)) enclose the Histidine kinase domain. H276 is modified (phosphohistidine; by autocatalysis).

Autophosphorylated.

The protein localises to the cell inner membrane. The catalysed reaction is ATP + protein L-histidine = ADP + protein N-phospho-L-histidine.. Its function is as follows. Member of the two-component regulatory system RstB/RstA. RstB functions as a membrane-associated protein kinase that phosphorylates RstA. The sequence is that of Sensor protein RstB (rstB) from Escherichia coli (strain K12).